The primary structure comprises 557 residues: MVLSDIEIANSVTMEPISKVANQLGIDEEALCLYGKYKAKIDARQLVALKDKPDGKLILVTAISPTPAGEGKTTTSVGLVDALSAIGKKAVIALREPSLGPVFGVKGGAAGGGHAQVVPMEDINLHFTGDFHAIGVANNLLAALIDNHIHHGNSLGIDSRRITWKRVVDMNDRQLRHIVDGLQGKVNGVPREDGYDITVASEIMAILCLSENISDLKARLEKIIIGYNYQGEPVTAKDLKAGGALAALLKDAIHPNLVQTLEHTPALIHGGPFANIAHGCNSVLATKLALKYGDYAVTEAGFGADLGAEKFIDIKCRMSGLRPAAVVLVATIRALKMHGGVPKANLATENVQAVVDGLPNLDKHLANIQDVYGLPVVVAINKFPLDTDAELQAVYDACDKRGVDVVISDVWANGGAGGRELAEKVVALAEQDNQFCFVYEEDDSIETKLTKIVTKVYGGKGIRLTPAAKRELADLERLGFGNYPICMAKTQYSFSDDAKKLGAPTDFTVTISNLKVSAGAGFIVALTGAIMTMPGLPKVPASETIDIDEEGNITGLF.

66-73 (TPAGEGKT) is a binding site for ATP.

This sequence belongs to the formate--tetrahydrofolate ligase family.

The catalysed reaction is (6S)-5,6,7,8-tetrahydrofolate + formate + ATP = (6R)-10-formyltetrahydrofolate + ADP + phosphate. It functions in the pathway one-carbon metabolism; tetrahydrofolate interconversion. The protein is Formate--tetrahydrofolate ligase 2 of Streptococcus pyogenes serotype M28 (strain MGAS6180).